Here is a 177-residue protein sequence, read N- to C-terminus: MDFKQYSPEELKECSMIEVVHSVLGDKKQATTFNELVQEIAQVLGLSQEQVNAKIAQFYTDLNIDGRFINLGENRWGLRSWYPYEQIDEEILPQPKPKKKRKVEEDGFDDYIEEDEDDFDDADVNEDEDDDVEDLDKVLEEEDGDDDDLDDLDEDDDDFAEEELEYDETEEEEEEEL.

Positions 14–81 (CSMIEVVHSV…GENRWGLRSW (68 aa)) constitute an HTH HARE-type domain. The tract at residues 90–177 (EILPQPKPKK…ETEEEEEEEL (88 aa)) is disordered. A compositionally biased stretch (acidic residues) spans 106 to 177 (DGFDDYIEED…ETEEEEEEEL (72 aa)).

The protein belongs to the RpoE family. In terms of assembly, RNAP is composed of a core of 2 alpha, a beta and a beta' subunits. The core is associated with a delta subunit and one of several sigma factors.

Participates in both the initiation and recycling phases of transcription. In the presence of the delta subunit, RNAP displays an increased specificity of transcription, a decreased affinity for nucleic acids, and an increased efficiency of RNA synthesis because of enhanced recycling. The sequence is that of Probable DNA-directed RNA polymerase subunit delta from Bacillus cereus (strain B4264).